Reading from the N-terminus, the 74-residue chain is MNTHGKLSKRIKQKFIKQLVAPGAQAAIDQMKFEIASEFGVNLGPDTTACANGFFGAEITKCLVQLREKLGSRY.

Belongs to the alpha/beta-type SASP family.

The chain is Protein SspS (sspS) from Streptococcus pyogenes.